Here is a 388-residue protein sequence, read N- to C-terminus: Succinate--CoA ligase [ADP-forming] subunit beta (388 aa).

Positions 9 to 244 (KEILRKYGVT…LDEEDPAEIE (236 aa)) constitute an ATP-grasp domain. Residues Lys46, 53-55 (GRG), Glu99, Ala102, and Glu107 contribute to the ATP site. Positions 199 and 213 each coordinate Mg(2+). Residues Asn264 and 321 to 323 (GIM) contribute to the substrate site.

This sequence belongs to the succinate/malate CoA ligase beta subunit family. In terms of assembly, heterotetramer of two alpha and two beta subunits. Mg(2+) is required as a cofactor.

It carries out the reaction succinate + ATP + CoA = succinyl-CoA + ADP + phosphate. The enzyme catalyses GTP + succinate + CoA = succinyl-CoA + GDP + phosphate. It participates in carbohydrate metabolism; tricarboxylic acid cycle; succinate from succinyl-CoA (ligase route): step 1/1. Functionally, succinyl-CoA synthetase functions in the citric acid cycle (TCA), coupling the hydrolysis of succinyl-CoA to the synthesis of either ATP or GTP and thus represents the only step of substrate-level phosphorylation in the TCA. The beta subunit provides nucleotide specificity of the enzyme and binds the substrate succinate, while the binding sites for coenzyme A and phosphate are found in the alpha subunit. This is Succinate--CoA ligase [ADP-forming] subunit beta from Janthinobacterium sp. (strain Marseille) (Minibacterium massiliensis).